The primary structure comprises 450 residues: Serine--tRNA ligase, cytoplasmic (450 aa).

238–240 serves as a coordination point for L-serine; that stretch reads TSE. ATP contacts are provided by residues 271 to 273 and valine 287; that span reads RRE. Residue glutamate 294 coordinates L-serine. 358-361 lines the ATP pocket; that stretch reads ELVS. Residue threonine 396 coordinates L-serine.

This sequence belongs to the class-II aminoacyl-tRNA synthetase family. Type-1 seryl-tRNA synthetase subfamily. In terms of assembly, homodimer. The tRNA molecule binds across the dimer.

It is found in the cytoplasm. The protein localises to the cytosol. It carries out the reaction tRNA(Ser) + L-serine + ATP = L-seryl-tRNA(Ser) + AMP + diphosphate + H(+). In terms of biological role, catalyzes the attachment of serine to tRNA(Ser) in a two-step reaction: serine is first activated by ATP to form Ser-AMP and then transferred to the acceptor end of tRNA(Ser). The polypeptide is Serine--tRNA ligase, cytoplasmic (Schizosaccharomyces pombe (strain 972 / ATCC 24843) (Fission yeast)).